A 445-amino-acid polypeptide reads, in one-letter code: MTLFGTDGVRGKAGKKVSAVNTMRLAMATGIYFKQFAKTNKILVGKDTRRSGYMIENALVSGLTAVGFDVIQIGPMPTPAIAFLTENMRCDAGIMISASHNPYYDNGIKFFDSEGNKLNRSEEEKIEEIFADDDALEDAQVTGKYIGKSKRIDDVIGRYIVHIKNSFPKSLSLAGKRVVIDCANGAGYIVGPTVLQELGAEVVVVGDEPDGFNINEGCGAMHPENLAKVVLDKRADIGLALDGDADRLVVVDEKGETVDGDKLMAVLAVHLKNTGELRGDGMVATVMSNQGLEEYLLEHGITVYRSAVGDKNVVEMMQEKGVNFGGEQSGHIIFSDYAKTGDGISSALQALAYLVSTGTKTSEAFNPYESYPQMLVNLPIEEKKPLESIEGLEQLMEQVEAEGMRHLFRYSGTENKIRLLLEGKNEKALETMMDECMDFFKRTLV.

S99 serves as the catalytic Phosphoserine intermediate. S99, D242, D244, and D246 together coordinate Mg(2+). Position 99 is a phosphoserine (S99).

This sequence belongs to the phosphohexose mutase family. It depends on Mg(2+) as a cofactor. In terms of processing, activated by phosphorylation.

The enzyme catalyses alpha-D-glucosamine 1-phosphate = D-glucosamine 6-phosphate. Catalyzes the conversion of glucosamine-6-phosphate to glucosamine-1-phosphate. The polypeptide is Phosphoglucosamine mutase (Sulfurovum sp. (strain NBC37-1)).